The sequence spans 282 residues: Aquaporin-6 (282 aa).

Residues M1–R25 lie on the Cytoplasmic side of the membrane. Residues A26 to M46 traverse the membrane as a helical segment. Topologically, residues R47–S54 are extracellular. The chain crosses the membrane as a helical span at residues V55–T73. Residues W74–G78 are Cytoplasmic-facing. An intramembrane region (discontinuously helical) is located at residues A79–A88. An NPA 1 motif is present at residues N82 to A84. At F89 to R99 the chain is on the cytoplasmic side. The chain crosses the membrane as a helical span at residues A100–V121. Topologically, residues M122–T141 are extracellular. Residues G142–S162 form a helical membrane-spanning segment. The Cytoplasmic segment spans residues T163–T168. Residues S169 to I188 form a helical membrane-spanning segment. Topologically, residues H189–G192 are extracellular. Residues C193–I205 constitute an intramembrane region (discontinuously helical). An NPA 2 motif is present at residues N196–A198. Residues I206–H213 are Extracellular-facing. The helical transmembrane segment at W214 to V234 threads the bilayer. Residues L235–V282 are Cytoplasmic-facing. The disordered stretch occupies residues G260–V282.

It belongs to the MIP/aquaporin (TC 1.A.8) family. Homotetramer; each monomer provides an independent solute pore.

It localises to the cytoplasmic vesicle membrane. The catalysed reaction is nitrate(in) = nitrate(out). It catalyses the reaction iodide(out) = iodide(in). The enzyme catalyses bromide(in) = bromide(out). It carries out the reaction chloride(in) = chloride(out). The catalysed reaction is Na(+)(in) = Na(+)(out). It catalyses the reaction H2O(in) = H2O(out). The enzyme catalyses CO2(out) = CO2(in). It carries out the reaction NH4(+)(in) = NH4(+)(out). Aquaporins form homotetrameric transmembrane channels, with each monomer independently mediating water transport across the plasma membrane along its osmotic gradient. Unlike classical aquaporins, AQP6 is an intracellular channel with selective anion permeability, particularly for nitrate, and exhibits very low water permeability. It may also facilitate the transport of gases, such as CO2 and NH4(+), as demonstrated in vitro. The chain is Aquaporin-6 from Homo sapiens (Human).